The chain runs to 57 residues: Large ribosomal subunit protein bL32 (57 aa).

The segment covering Met1–Arg16 has biased composition (basic residues). Residues Met1–His37 are disordered. Residues Ala21 to Glu31 show a composition bias toward polar residues.

This sequence belongs to the bacterial ribosomal protein bL32 family.

The sequence is that of Large ribosomal subunit protein bL32 from Hydrogenovibrio crunogenus (strain DSM 25203 / XCL-2) (Thiomicrospira crunogena).